Here is a 643-residue protein sequence, read N- to C-terminus: Threonine--tRNA ligase (643 aa).

Residues 1 to 62 (MSFSVTLPDG…DEDVEAAIIT (62 aa)) form the TGS domain. The segment at 239–537 (DHRTIGRDLD…LTEIYKGAFP (299 aa)) is catalytic. The Zn(2+) site is built by C333, H384, and H514.

This sequence belongs to the class-II aminoacyl-tRNA synthetase family. As to quaternary structure, homodimer. Zn(2+) is required as a cofactor.

The protein resides in the cytoplasm. The catalysed reaction is tRNA(Thr) + L-threonine + ATP = L-threonyl-tRNA(Thr) + AMP + diphosphate + H(+). Functionally, catalyzes the attachment of threonine to tRNA(Thr) in a two-step reaction: L-threonine is first activated by ATP to form Thr-AMP and then transferred to the acceptor end of tRNA(Thr). Also edits incorrectly charged L-seryl-tRNA(Thr). The sequence is that of Threonine--tRNA ligase from Lactobacillus gasseri (strain ATCC 33323 / DSM 20243 / BCRC 14619 / CIP 102991 / JCM 1131 / KCTC 3163 / NCIMB 11718 / NCTC 13722 / AM63).